We begin with the raw amino-acid sequence, 92 residues long: Small ribosomal subunit protein uS17 (92 aa).

This sequence belongs to the universal ribosomal protein uS17 family. As to quaternary structure, part of the 30S ribosomal subunit.

In terms of biological role, one of the primary rRNA binding proteins, it binds specifically to the 5'-end of 16S ribosomal RNA. The polypeptide is Small ribosomal subunit protein uS17 (Cupriavidus necator (strain ATCC 17699 / DSM 428 / KCTC 22496 / NCIMB 10442 / H16 / Stanier 337) (Ralstonia eutropha)).